Consider the following 404-residue polypeptide: Probable tRNA sulfurtransferase (404 aa).

The 106-residue stretch at 61-166 (EAVSERLKDV…SGYSYIMCDE (106 aa)) folds into the THUMP domain. ATP-binding positions include 184–185 (LL), 209–210 (HF), R266, G288, and Q297.

This sequence belongs to the ThiI family.

Its subcellular location is the cytoplasm. It catalyses the reaction [ThiI sulfur-carrier protein]-S-sulfanyl-L-cysteine + a uridine in tRNA + 2 reduced [2Fe-2S]-[ferredoxin] + ATP + H(+) = [ThiI sulfur-carrier protein]-L-cysteine + a 4-thiouridine in tRNA + 2 oxidized [2Fe-2S]-[ferredoxin] + AMP + diphosphate. The enzyme catalyses [ThiS sulfur-carrier protein]-C-terminal Gly-Gly-AMP + S-sulfanyl-L-cysteinyl-[cysteine desulfurase] + AH2 = [ThiS sulfur-carrier protein]-C-terminal-Gly-aminoethanethioate + L-cysteinyl-[cysteine desulfurase] + A + AMP + 2 H(+). The protein operates within cofactor biosynthesis; thiamine diphosphate biosynthesis. In terms of biological role, catalyzes the ATP-dependent transfer of a sulfur to tRNA to produce 4-thiouridine in position 8 of tRNAs, which functions as a near-UV photosensor. Also catalyzes the transfer of sulfur to the sulfur carrier protein ThiS, forming ThiS-thiocarboxylate. This is a step in the synthesis of thiazole, in the thiamine biosynthesis pathway. The sulfur is donated as persulfide by IscS. The sequence is that of Probable tRNA sulfurtransferase from Bacillus cereus (strain ATCC 14579 / DSM 31 / CCUG 7414 / JCM 2152 / NBRC 15305 / NCIMB 9373 / NCTC 2599 / NRRL B-3711).